The following is a 31-amino-acid chain: Cytochrome b6-f complex subunit 6 (31 aa).

The helical transmembrane segment at 4-26 (LTSYFGFLLAALTITSALFIGLN) threads the bilayer.

The protein belongs to the PetL family. The 4 large subunits of the cytochrome b6-f complex are cytochrome b6, subunit IV (17 kDa polypeptide, PetD), cytochrome f and the Rieske protein, while the 4 small subunits are PetG, PetL, PetM and PetN. The complex functions as a dimer.

The protein localises to the plastid. The protein resides in the chloroplast thylakoid membrane. In terms of biological role, component of the cytochrome b6-f complex, which mediates electron transfer between photosystem II (PSII) and photosystem I (PSI), cyclic electron flow around PSI, and state transitions. PetL is important for photoautotrophic growth as well as for electron transfer efficiency and stability of the cytochrome b6-f complex. This chain is Cytochrome b6-f complex subunit 6, found in Amaranthus caudatus (Love-lies-bleeding).